Reading from the N-terminus, the 331-residue chain is Cytosolic 5'-nucleotidase 3A (331 aa).

Catalysis depends on Asp-83, which acts as the Nucleophile. Positions 83 and 85 each coordinate Mg(2+). Asp-85 acts as the Proton donor in catalysis. Glu-130 is a CMP binding site. Positions 130 and 151 each coordinate N(7)-methyl-GMP. Residues 198-199 (SA) and Lys-247 each bind substrate. Asp-272 is a binding site for Mg(2+).

This sequence belongs to the pyrimidine 5'-nucleotidase family.

Its subcellular location is the cytoplasm. The catalysed reaction is N(7)-methyl-GMP + H2O = N(7)-methylguanosine + phosphate. It catalyses the reaction a ribonucleoside 5'-phosphate + H2O = a ribonucleoside + phosphate. Its function is as follows. Nucleotidase which shows specific activity towards cytidine monophosphate (CMP) and 7-methylguanosine monophosphate (m(7)GMP). CMP seems to be the preferred substrate. This Gallus gallus (Chicken) protein is Cytosolic 5'-nucleotidase 3A (NT5C3A).